The primary structure comprises 267 residues: uncharacterized protein (267 aa).

Positions 37–62 form a coiled coil; it reads DSSNNYKKKYKKYKRKYIDLKKQLNY.

This is an uncharacterized protein from Acanthamoeba polyphaga (Amoeba).